Consider the following 414-residue polypeptide: DNA polymerase IV (414 aa).

Positions 8-189 constitute a UmuC domain; the sequence is IFHIDMNSFY…LPIEEMHGIG (182 aa). Mg(2+)-binding residues include aspartate 12 and aspartate 108. The active site involves glutamate 109. A disordered region spans residues 394-414; sequence EESKTRGTSFNRDFFQDEKKR.

Belongs to the DNA polymerase type-Y family. Monomer. The cofactor is Mg(2+).

The protein resides in the cytoplasm. The enzyme catalyses DNA(n) + a 2'-deoxyribonucleoside 5'-triphosphate = DNA(n+1) + diphosphate. Functionally, poorly processive, error-prone DNA polymerase involved in untargeted mutagenesis. Copies undamaged DNA at stalled replication forks, which arise in vivo from mismatched or misaligned primer ends. These misaligned primers can be extended by PolIV. Exhibits no 3'-5' exonuclease (proofreading) activity. May be involved in translesional synthesis, in conjunction with the beta clamp from PolIII. The sequence is that of DNA polymerase IV from Bacillus velezensis (strain DSM 23117 / BGSC 10A6 / LMG 26770 / FZB42) (Bacillus amyloliquefaciens subsp. plantarum).